The sequence spans 496 residues: Fatty acyl-CoA reductase 8 (496 aa).

Belongs to the fatty acyl-CoA reductase family.

It carries out the reaction a long-chain fatty acyl-CoA + 2 NADPH + 2 H(+) = a long-chain primary fatty alcohol + 2 NADP(+) + CoA. Its function is as follows. Catalyzes the reduction of fatty acyl-CoA to fatty alcohols. Catalyzes specifically the formation of C16:0 fatty alcohol. In Arabidopsis thaliana (Mouse-ear cress), this protein is Fatty acyl-CoA reductase 8 (FAR8).